The sequence spans 241 residues: Thiamine import ATP-binding protein ThiQ (241 aa).

The ABC transporter domain maps to 7–235 (IRLSDVRFSY…AGPEALRHYI (229 aa)). 37–44 (GPSGSGKS) is a binding site for ATP.

It belongs to the ABC transporter superfamily. Thiamine importer (TC 3.A.1.19.1) family. As to quaternary structure, the complex is composed of two ATP-binding proteins (ThiQ), two transmembrane proteins (ThiP) and a solute-binding protein (ThiB).

The protein localises to the cell inner membrane. It catalyses the reaction thiamine(out) + ATP + H2O = thiamine(in) + ADP + phosphate + H(+). Functionally, part of the ABC transporter complex ThiBPQ involved in thiamine import. Responsible for energy coupling to the transport system. This chain is Thiamine import ATP-binding protein ThiQ, found in Brucella abortus biovar 1 (strain 9-941).